Here is a 140-residue protein sequence, read N- to C-terminus: Large ribosomal subunit protein uL11 (140 aa).

This sequence belongs to the universal ribosomal protein uL11 family. In terms of assembly, part of the ribosomal stalk of the 50S ribosomal subunit. Interacts with L10 and the large rRNA to form the base of the stalk. L10 forms an elongated spine to which L12 dimers bind in a sequential fashion forming a multimeric L10(L12)X complex. One or more lysine residues are methylated.

Its function is as follows. Forms part of the ribosomal stalk which helps the ribosome interact with GTP-bound translation factors. The polypeptide is Large ribosomal subunit protein uL11 (Staphylococcus carnosus (strain TM300)).